The sequence spans 475 residues: Probable GABA permease (475 aa).

The next 12 membrane-spanning stretches (helical) occupy residues 27 to 47 (VTML…SGHA), 48 to 68 (IAAA…LVVL), 105 to 125 (LYWW…AAIL), 127 to 147 (AWFP…LLTV), 163 to 183 (FALL…VAIV), 211 to 231 (AVLG…IVTI), 250 to 270 (VIWR…SIVP), 296 to 316 (LIVD…AIYT), 345 to 365 (PAVL…YFAP), 368 to 388 (VFTF…LVIA), 413 to 433 (PWLT…MLIM), and 438 to 458 (HEVF…LLNA).

This sequence belongs to the amino acid-polyamine-organocation (APC) superfamily. Amino acid transporter (AAT) (TC 2.A.3.1) family.

Its subcellular location is the membrane. In terms of biological role, involved in the degradation of beta-alanine. This Pseudomonas aeruginosa (strain ATCC 15692 / DSM 22644 / CIP 104116 / JCM 14847 / LMG 12228 / 1C / PRS 101 / PAO1) protein is Probable GABA permease (bauD).